The following is a 141-amino-acid chain: Large ribosomal subunit protein uL11 (141 aa).

The protein belongs to the universal ribosomal protein uL11 family. As to quaternary structure, part of the ribosomal stalk of the 50S ribosomal subunit. Interacts with L10 and the large rRNA to form the base of the stalk. L10 forms an elongated spine to which L12 dimers bind in a sequential fashion forming a multimeric L10(L12)X complex. Post-translationally, one or more lysine residues are methylated.

Forms part of the ribosomal stalk which helps the ribosome interact with GTP-bound translation factors. This is Large ribosomal subunit protein uL11 from Ruegeria sp. (strain TM1040) (Silicibacter sp.).